The sequence spans 79 residues: MSNKGQLLQGPFLNALRKEHVPVSIYLVNGIKLQGNIESFDQYVVLLRNTVTQMVYKHAISTVVPARAVNFRVDDAAEA.

The Sm domain occupies 10 to 69 (GPFLNALRKEHVPVSIYLVNGIKLQGNIESFDQYVVLLRNTVTQMVYKHAISTVVPARAV).

Belongs to the Hfq family. In terms of assembly, homohexamer.

Functionally, RNA chaperone that binds small regulatory RNA (sRNAs) and mRNAs to facilitate mRNA translational regulation in response to envelope stress, environmental stress and changes in metabolite concentrations. Also binds with high specificity to tRNAs. In Cupriavidus necator (strain ATCC 17699 / DSM 428 / KCTC 22496 / NCIMB 10442 / H16 / Stanier 337) (Ralstonia eutropha), this protein is RNA-binding protein Hfq.